A 786-amino-acid polypeptide reads, in one-letter code: Leucine-rich repeat extensin-like protein 2 (786 aa).

An N-terminal signal peptide occupies residues 1-28 (MLLFPSTSLRLFFFLFLLFSSCFLQIRG). Asn-73 and Asn-79 each carry an N-linked (GlcNAc...) asparagine glycan. 9 LRR repeats span residues 100–124 (TRVV…LGLL), 125–147 (TDLA…TFKH), 149–172 (KLLF…VLSL), 173–196 (PSLK…LFDK), 198–219 (LDAI…MGNS), 221–243 (VSAL…GLMG), 244–267 (KTLN…IGNL), 268–291 (KNVT…IGNM), and 292–315 (KSLE…ICQL). N-linked (GlcNAc...) asparagine glycans are attached at residues Asn-255 and Asn-269. N-linked (GlcNAc...) asparagine glycans are attached at residues Asn-320 and Asn-346. Disordered stretches follow at residues 352–372 (IDGK…SRSV), 390–589 (FKMS…YYAV), 624–645 (PPVY…YYPP), and 694–786 (PPPS…IPYY). A compositionally biased stretch (basic and acidic residues) spans 353–362 (DGKEDQRSSK). Residues 384 to 786 (SPPPPSFKMS…SPPPPSIPYY (403 aa)) form a contains the Ser-Pro(4) repeats region. 3 stretches are compositionally biased toward pro residues: residues 460–477 (YPPP…PPPS), 487–542 (YPPP…PPPK), and 566–589 (SPPP…YYAV). Pro residues-rich tracts occupy residues 694-713 (PPPS…PPST), 720-737 (PASP…PPPK), 752-769 (PTPP…PLPP), and 777-786 (SPPPPSIPYY).

Post-translationally, hydroxylated on proline residues in the S-P-P-P-P repeat. In terms of processing, O-glycosylated on hydroxyprolines. In terms of tissue distribution, mostly expressed in roots, also present in stems at low levels. In roots, confined to differentiation zones, the collet, and meristematic cells of tips.

The protein resides in the secreted. The protein localises to the cell wall. In terms of biological role, modulates cell morphogenesis by regulating cell wall formation and assembly, and/or growth polarization. Together with LRX2, component of the extracellular mechanism regulating root hair morphogenesis and elongation. The protein is Leucine-rich repeat extensin-like protein 2 (LRX2) of Arabidopsis thaliana (Mouse-ear cress).